Reading from the N-terminus, the 161-residue chain is RNA pyrophosphohydrolase (161 aa).

Residues 12 to 154 (PYRPGVGMMI…KRKLYQAVVK (143 aa)) form the Nudix hydrolase domain. The Nudix box motif lies at 46 to 67 (GGIVPGETPSIAAMREMLEEIG).

This sequence belongs to the Nudix hydrolase family. RppH subfamily. Requires a divalent metal cation as cofactor.

In terms of biological role, accelerates the degradation of transcripts by removing pyrophosphate from the 5'-end of triphosphorylated RNA, leading to a more labile monophosphorylated state that can stimulate subsequent ribonuclease cleavage. In Rickettsia canadensis (strain McKiel), this protein is RNA pyrophosphohydrolase.